The primary structure comprises 320 residues: Ribosomal large subunit pseudouridine synthase C (320 aa).

The 73-residue stretch at 23–95 (QRLDNFLLAK…TKLNKVAELE (73 aa)) folds into the S4 RNA-binding domain. The active site involves Asp147.

Belongs to the pseudouridine synthase RluA family.

It carries out the reaction uridine(955/2504/2580) in 23S rRNA = pseudouridine(955/2504/2580) in 23S rRNA. Responsible for synthesis of pseudouridine from uracil at positions 955, 2504 and 2580 in 23S ribosomal RNA. The sequence is that of Ribosomal large subunit pseudouridine synthase C (rluC) from Haemophilus ducreyi (strain 35000HP / ATCC 700724).